A 240-amino-acid polypeptide reads, in one-letter code: uncharacterized protein (240 aa).

The ABC transporter domain occupies 2–223 (VRIQDLSLAF…GNAPRELHQA (222 aa)). 34–41 (GSSGVGKS) lines the ATP pocket.

The protein belongs to the ABC transporter superfamily.

This is an uncharacterized protein from Haemophilus influenzae (strain ATCC 51907 / DSM 11121 / KW20 / Rd).